The sequence spans 160 residues: 17.9 kDa class II heat shock protein (160 aa).

One can recognise a sHSP domain in the interval 44 to 160; it reads DARAMAATPA…KPKTIQVQVA (117 aa).

It belongs to the small heat shock protein (HSP20) family.

Its subcellular location is the cytoplasm. In Helianthus annuus (Common sunflower), this protein is 17.9 kDa class II heat shock protein (HSP17.9).